The sequence spans 554 residues: Intraflagellar transport protein 56 (554 aa).

Positions 1-23 (MMLSRAKPAVGNEVQQIDKKKKK) are disordered. 4 TPR repeats span residues 57 to 90 (EDTE…EGCN), 92 to 125 (DVWV…LQNR), 151 to 184 (IEDQ…NRDF), and 468 to 501 (ANDC…EGKR).

The protein belongs to the IFT56 family. As to quaternary structure, component of the IFT complex B.

The protein localises to the cell projection. It is found in the cilium. In terms of biological role, component of the intraflagellar transport (IFT) complex B required for transport of proteins in the motile cilium. Required for transport of specific ciliary cargo proteins related to motility, while it is neither required for IFT complex B assembly or motion nor for cilium assembly. Plays a key role in maintaining the integrity of the IFT complex B and the proper ciliary localization of the IFT complex B components. Essential for maintaining proper microtubule organization within the ciliary axoneme. The chain is Intraflagellar transport protein 56 from Xenopus tropicalis (Western clawed frog).